A 295-amino-acid polypeptide reads, in one-letter code: Succinate dehydrogenase [ubiquinone] iron-sulfur subunit, mitochondrial (295 aa).

The region spanning 67 to 144 (EKPRLQSYTL…DTKIYPLPHM (78 aa)) is the 2Fe-2S ferredoxin-type domain. The [2Fe-2S] cluster site is built by Cys106, Cys111, Cys114, and Cys126. In terms of domain architecture, 4Fe-4S ferredoxin-type spans 185–215 (ERRRLDGLYECILCACCSTSCPSYWWNQDEY). Cys195, Cys198, and Cys201 together coordinate [4Fe-4S] cluster. Cys205 contacts [3Fe-4S] cluster. Trp210 is a binding site for a ubiquinone. The [3Fe-4S] cluster site is built by Cys252 and Cys258. A [4Fe-4S] cluster-binding site is contributed by Cys262.

Belongs to the succinate dehydrogenase/fumarate reductase iron-sulfur protein family. Component of complex II composed of four subunits: a flavoprotein (FP), an iron-sulfur protein (IP), and a cytochrome b composed of a large and a small subunit. Requires [2Fe-2S] cluster as cofactor. [3Fe-4S] cluster is required as a cofactor. It depends on [4Fe-4S] cluster as a cofactor.

The protein localises to the mitochondrion inner membrane. The catalysed reaction is a quinone + succinate = fumarate + a quinol. It participates in carbohydrate metabolism; tricarboxylic acid cycle; fumarate from succinate (eukaryal route): step 1/1. Iron-sulfur protein (IP) subunit of succinate dehydrogenase (SDH) that is involved in complex II of the mitochondrial electron transport chain and is responsible for transferring electrons from succinate to ubiquinone (coenzyme Q). This is Succinate dehydrogenase [ubiquinone] iron-sulfur subunit, mitochondrial (SDH2) from Mycosarcoma maydis (Corn smut fungus).